The following is a 124-amino-acid chain: Protein MT1307 (124 aa).

The tat-type signal signal peptide spans 1–35 (MTTMITLRRRFAVAVAGVATAAATTVTLAPAPANA).

This sequence to M.tuberculosis Rv1813c. Predicted to be exported by the Tat system. The position of the signal peptide cleavage has not been experimentally proven.

This chain is Protein MT1307, found in Mycobacterium tuberculosis (strain CDC 1551 / Oshkosh).